The sequence spans 282 residues: Bis(5'-nucleosyl)-tetraphosphatase, symmetrical (282 aa).

It belongs to the Ap4A hydrolase family.

It catalyses the reaction P(1),P(4)-bis(5'-adenosyl) tetraphosphate + H2O = 2 ADP + 2 H(+). Functionally, hydrolyzes diadenosine 5',5'''-P1,P4-tetraphosphate to yield ADP. This is Bis(5'-nucleosyl)-tetraphosphatase, symmetrical from Salmonella arizonae (strain ATCC BAA-731 / CDC346-86 / RSK2980).